Here is a 745-residue protein sequence, read N- to C-terminus: Catalase-peroxidase (745 aa).

A cross-link (tryptophyl-tyrosyl-methioninium (Trp-Tyr) (with M-249)) is located at residues 97-223 (WHSAGTYRTG…LAAVQMGLIY (127 aa)). The Proton acceptor role is filled by H98. The tryptophyl-tyrosyl-methioninium (Tyr-Met) (with W-97) cross-link spans 223–249 (YVNPEGPDGSPDPWASARDIRMTFARM). Position 264 (H264) interacts with heme b. The segment at 345–368 (KQWQPVNPKPEDLAPGAHSPDRRV) is disordered.

Belongs to the peroxidase family. Peroxidase/catalase subfamily. As to quaternary structure, homodimer or homotetramer. The cofactor is heme b. In terms of processing, formation of the three residue Trp-Tyr-Met cross-link is important for the catalase, but not the peroxidase activity of the enzyme.

The enzyme catalyses H2O2 + AH2 = A + 2 H2O. The catalysed reaction is 2 H2O2 = O2 + 2 H2O. In terms of biological role, bifunctional enzyme with both catalase and broad-spectrum peroxidase activity. This is Catalase-peroxidase from Phenylobacterium zucineum (strain HLK1).